The chain runs to 536 residues: Vacuolar segregation protein pep7 (536 aa).

A disordered region spans residues 1–31; it reads MQNGKRRIGVRISSNLSNHSGTNLSTSAQSD. Over residues 12-31 the composition is skewed to polar residues; sequence ISSNLSNHSGTNLSTSAQSD. Residues 39 to 62 form a C2H2-type zinc finger; the sequence is TECPICGLELPNLSALNDHLDVTH. The FYVE-type 1; degenerate zinc finger occupies 136 to 201; sequence PDMVCHDPMC…VCRECYEGRP (66 aa). Residues Cys-158, Cys-161, Cys-193, Cys-196, Cys-281, Cys-284, Cys-297, Cys-300, Cys-305, Cys-308, Cys-324, and Cys-327 each contribute to the Zn(2+) site. The FYVE-type 2 zinc-finger motif lies at 275-332; it reads DSVVQICPECNNSFTLTRRRRHCRLCGRVICRFCVLEISLPQHPQPLLICMSCNQNYF.

Required for vacuole segregation and vacuole protein sorting. Possibly part of a complex which tethers the vacuole membrane to microtubules, either directly or via kinesin or dynein-like motor proteins. Probably functions in several interorganelle traffic pathways. This is Vacuolar segregation protein pep7 (pep7) from Schizosaccharomyces pombe (strain 972 / ATCC 24843) (Fission yeast).